Reading from the N-terminus, the 457-residue chain is Acetylcholine receptor subunit alpha-1-B (457 aa).

An N-terminal signal peptide occupies residues 1 to 20 (MDYTASCLIFLFIAAGTVFG). The Extracellular portion of the chain corresponds to 21-230 (TDHETRLIGD…ITYHFVLQRL (210 aa)). Disulfide bonds link cysteine 148–cysteine 162 and cysteine 212–cysteine 213. N-linked (GlcNAc...) asparagine glycosylation occurs at asparagine 161. 3 consecutive transmembrane segments (helical) span residues 231-255 (PLYF…VFYL), 263-281 (MTLS…LVIV), and 297-316 (YMLF…VIVI). Topologically, residues 317-428 (NTHHRSPSTH…WKFVAMVLDH (112 aa)) are cytoplasmic. Residues 429 to 447 (ILLAVFMTVCVIGTLAVFA) form a helical membrane-spanning segment.

The protein belongs to the ligand-gated ion channel (TC 1.A.9) family. Acetylcholine receptor (TC 1.A.9.1) subfamily. Alpha-1/CHRNA1 sub-subfamily. In terms of assembly, one of the alpha chains that assemble within the acetylcholine receptor, a pentamer of two alpha chains, a beta, a delta, and a gamma or epsilon chains.

It localises to the postsynaptic cell membrane. Its subcellular location is the cell membrane. The catalysed reaction is K(+)(in) = K(+)(out). It carries out the reaction Na(+)(in) = Na(+)(out). Upon acetylcholine binding, the AChR responds by an extensive change in conformation that affects all subunits and leads to opening of an ion-conducting channel across the plasma membrane. This Xenopus laevis (African clawed frog) protein is Acetylcholine receptor subunit alpha-1-B (chrna1-b).